The primary structure comprises 184 residues: Rubrerythrin-2 (184 aa).

A Ferritin-like diiron domain is found at 2 to 146 (SVKNAMTADF…DAQDSAKENK (145 aa)). 10 residues coordinate Fe(3+): E19, E52, E94, E97, E128, H131, C156, C159, C171, and C174. The region spanning 151-184 (GKVYICPVCGFTTLDENIEQCPICGVKKDKFQAF) is the Rubredoxin-like domain.

Requires Fe(3+) as cofactor.

The enzyme catalyses H2O2 + NADH + H(+) = NAD(+) + 2 H2O. Its activity is regulated as follows. Rubredoxin (Rd) increases the NADH consumption rate by serving as an intermediary electron-transfer shuttle between NROR and Rbr2. Functionally, functions as the terminal component of an NADH peroxidase (NADH:H(2)O(2) oxidoreductase) when using NADH:rubredoxin oxidoreductase (NROR) as the electron transport intermediary from NADH to Rbr2. The polypeptide is Rubrerythrin-2 (rbr2) (Clostridium acetobutylicum (strain ATCC 824 / DSM 792 / JCM 1419 / IAM 19013 / LMG 5710 / NBRC 13948 / NRRL B-527 / VKM B-1787 / 2291 / W)).